Here is a 350-residue protein sequence, read N- to C-terminus: Transmembrane protein 185B (350 aa).

The next 7 membrane-spanning stretches (helical) occupy residues 16–36 (LIYA…DGII), 41–61 (WAVF…ASVG), 81–101 (FKAM…EILV), 111–131 (FWLL…AACV), 168–188 (WLVV…VVLY), 211–231 (VTMA…EVLL), and 240–260 (TFSY…LMAT).

It belongs to the TMEM185 family.

The protein resides in the membrane. The polypeptide is Transmembrane protein 185B (Tmem185b) (Mus musculus (Mouse)).